The chain runs to 545 residues: T-complex protein 1 subunit gamma (545 aa).

Methionine 1 bears the N-acetylmethionine mark. Positions 1–24 (MMGHRPVLVLSQNTKRESGRKVQS) are disordered. Position 11 is a phosphoserine (serine 11). Lysine 15 participates in a covalent cross-link: Glycyl lysine isopeptide (Lys-Gly) (interchain with G-Cter in SUMO2). Glycine 42 provides a ligand contact to ADP. Glycine 42 contributes to the ATP binding site. Residue aspartate 93 participates in Mg(2+) binding. Glycine 94, threonine 95, threonine 96, serine 97, threonine 162, and lysine 163 together coordinate ADP. ATP-binding residues include glycine 94, threonine 95, and threonine 96. Serine 170 carries the phosphoserine modification. Residue lysine 222 is modified to N6-acetyllysine. A phosphoserine mark is found at serine 243 and serine 244. The residue at position 247 (tyrosine 247) is a Phosphotyrosine. Residues lysine 248 and lysine 249 each participate in a glycyl lysine isopeptide (Lys-Gly) (interchain with G-Cter in SUMO2) cross-link. Phosphoserine is present on serine 252. Residues cysteine 366 and cysteine 372 are joined by a disulfide bond. Residue lysine 381 forms a Glycyl lysine isopeptide (Lys-Gly) (interchain with G-Cter in SUMO2) linkage. Position 411 (glycine 411) interacts with ADP. Position 411 (glycine 411) interacts with ATP. Threonine 430 and threonine 459 each carry phosphothreonine. The ADP site is built by glycine 482, glutamate 483, glutamate 497, and lysine 502. Position 482 (glycine 482) interacts with ATP. Glutamate 497 contacts ATP. Residues 526–545 (HKKKGDDQSRQGGAPDAGQE) are disordered.

The protein belongs to the TCP-1 chaperonin family. Component of the chaperonin-containing T-complex (TRiC), a hexadecamer composed of two identical back-to-back stacked rings enclosing a protein folding chamber. Each ring is made up of eight different subunits: TCP1/CCT1, CCT2, CCT3, CCT4, CCT5, CCT6A/CCT6, CCT7, CCT8. Interacts with PACRG. Interacts with DNAAF4. Interacts with DLEC1.

It localises to the cytoplasm. It carries out the reaction ATP + H2O = ADP + phosphate + H(+). In terms of biological role, component of the chaperonin-containing T-complex (TRiC), a molecular chaperone complex that assists the folding of actin, tubulin and other proteins upon ATP hydrolysis. The TRiC complex mediates the folding of WRAP53/TCAB1, thereby regulating telomere maintenance. As part of the TRiC complex may play a role in the assembly of BBSome, a complex involved in ciliogenesis regulating transports vesicles to the cilia. The protein is T-complex protein 1 subunit gamma (CCT3) of Homo sapiens (Human).